Reading from the N-terminus, the 1500-residue chain is MVATFNPAVGSHVWVEDPDEAWLDGEVVEINGDQIKVLCASGKQVVVKDSNIYPKDVEAPASGVEDMTRLAYLHEPGVLQNLQSRYDINEIYTYTGSILIAVNPFRRLPHLYSSHMMTQYKGASLGELSPHPFAVADAAYRQMVNEGVSQSILVSGESGAGKTESTKLLMRYLAFMGGRGAATEGRTVEQKVLESNPVLEAFGNAKTVKNNNSSRFGKFVEIQFDQSGRISGAAIRTYLLERSRVCQVSDPERNYHCFYMLCAAPEEDAKKFKLGDPKIYHYLNQSKCIQLDAMNDAEEYHATKKAMDVVGISSEEQDAIFRVVASILHLGNIEFAKGTEIDSSIPRDEKSWFHLKTAAELLMCNEKSLEDSLCKRIMATRDETITKTLDPEAALLSRDALAKVMYSRLFDWLVEKINTSIGQDPDSKYLIGVLDIYGFESFKTNSFEQFCINLTNEKLQQHFNQHVFKMEQEEYKKEEINWSYIEFVDNQDILDLIEKKPGGIIALLDEACMFPRSTHETFAQKLYQTYKNHKRFTKPKLARSDFTICHYAGDVTYQTELFLDKNKDYVIAEHQALLNASTCSFVANLFPPVSDDSKQSKFSSIGTRFKQQLVSLLEILNTTEPHYIRCIKPNNLLKPGIFENQNVLQQLRCGGVMEAIRISCAGYPTRKHFDEFLNRFGIIAPQVLDKNSNEPAACKKLLDKAGLEGYQIGKSKVFLRAGQMADLDTRRTEILGRSASIIQRKVRSYLAQKTFIQLRISATQIQAVCRGYLARSIYEGMRREAAALKIQRDLRKFLARKAYTELFSATILIQAGMRGMVSRKELCLRRQTKAATIIQTRCRVYLARLHYRKLKKAAITTQCAWRGKVARKELKNLKMAARETGALQEAKNKLEKQVEELTWRLQLEKRMRTDLEEAKKQENAKYESSLEEIQNKFKETEALLIKEREAAKTVSEVLPIIKEVPVVDQELMEKLTNENEKLKGMVSSLEIKIDETAKELHETARISQDRLKQALAAESKVAKLKTAMQRLEEKISDMETEKQIMLQQTILNTPVKSVAGHPPTATIKNLENGHRTNLENQFNEVEVNGNAGKSAAERQLENVDTLIDCVKENIGFSNGKPIAAFTIYKCLLHWKCFESEKTSAFDRLIEMIGSAIENEDDNGHLAYWLTNTSALLFLLQKSLKPAGAGATASKKPPITTSLFGRMALSFRSSPNLAAAAEAAALAVIRPVEAKYPALLFKQQLAAYVEKIFGMIRDNLKKELSALISMCIQAPRISKGGIQRSARSLGKDSPAIHWQSIIDGLNSLLAILKDNYVPLVLIQKIHTQTFSFVNVQLFNSLLLRKECCTFSNGEFVKSGLAELELWCGQVNEYAGPSWDELKHIRQAVGFLVIHQKYRVSYDDIVHDLCPILSVQQLYRICTLYWDDCYNTRSVSQEVISSMRALMTEESNDADSNSFLLDDNSSIPFSIDEISNSMHEKDFASVKPAKELLENPEFVFLH.

The 50-residue stretch at 8-57 (AVGSHVWVEDPDEAWLDGEVVEINGDQIKVLCASGKQVVVKDSNIYPKDV) folds into the Myosin N-terminal SH3-like domain. In terms of domain architecture, Myosin motor spans 62 to 732 (SGVEDMTRLA…QMADLDTRRT (671 aa)). Residues 156–163 (GESGAGKT) and 210–218 (NNNSSRFGK) contribute to the ATP site. Actin-binding stretches follow at residues 496–530 (LIEK…YQTY), 532–555 (NHKR…AGDV), 590–613 (FPPV…KQQL), and 613–635 (LVSL…KPNN). 6 consecutive IQ domains span residues 735–764 (LGRS…SATQ), 758–787 (LRIS…EAAA), 783–812 (REAA…ATIL), 806–835 (LFSA…TKAA), 831–860 (QTKA…AAIT), and 854–883 (LKKA…AARE). Positions 884–1049 (TGALQEAKNK…TEKQIMLQQT (166 aa)) form a coiled coil. The Dilute domain maps to 1146-1447 (DRLIEMIGSA…ISSMRALMTE (302 aa)).

It belongs to the TRAFAC class myosin-kinesin ATPase superfamily. Myosin family. Plant myosin class XI subfamily. As to quaternary structure, homodimer.

It localises to the cytoplasm. Functionally, myosin heavy chain that is required for the cell cycle-regulated transport of various organelles and proteins for their segregation. Functions by binding with its tail domain to receptor proteins on organelles and exerting force with its N-terminal motor domain against actin filaments, thereby transporting its cargo along polarized actin cables. The sequence is that of Myosin-8 (XI-B) from Arabidopsis thaliana (Mouse-ear cress).